An 88-amino-acid chain; its full sequence is Small ribosomal subunit protein bS16 (88 aa).

Belongs to the bacterial ribosomal protein bS16 family.

The sequence is that of Small ribosomal subunit protein bS16 from Anaeromyxobacter dehalogenans (strain 2CP-1 / ATCC BAA-258).